Consider the following 478-residue polypeptide: Protein nucleotidyltransferase YdiU (478 aa).

8 residues coordinate ATP: Gly-84, Gly-86, Arg-87, Lys-107, Asp-119, Gly-120, Arg-170, and Arg-177. Asp-246 serves as the catalytic Proton acceptor. Mg(2+) is bound by residues Asn-247 and Asp-256. Asp-256 contacts ATP.

Belongs to the SELO family. The cofactor is Mg(2+). Mn(2+) serves as cofactor.

The enzyme catalyses L-seryl-[protein] + ATP = 3-O-(5'-adenylyl)-L-seryl-[protein] + diphosphate. It catalyses the reaction L-threonyl-[protein] + ATP = 3-O-(5'-adenylyl)-L-threonyl-[protein] + diphosphate. The catalysed reaction is L-tyrosyl-[protein] + ATP = O-(5'-adenylyl)-L-tyrosyl-[protein] + diphosphate. It carries out the reaction L-histidyl-[protein] + UTP = N(tele)-(5'-uridylyl)-L-histidyl-[protein] + diphosphate. The enzyme catalyses L-seryl-[protein] + UTP = O-(5'-uridylyl)-L-seryl-[protein] + diphosphate. It catalyses the reaction L-tyrosyl-[protein] + UTP = O-(5'-uridylyl)-L-tyrosyl-[protein] + diphosphate. Nucleotidyltransferase involved in the post-translational modification of proteins. It can catalyze the addition of adenosine monophosphate (AMP) or uridine monophosphate (UMP) to a protein, resulting in modifications known as AMPylation and UMPylation. This Escherichia coli O7:K1 (strain IAI39 / ExPEC) protein is Protein nucleotidyltransferase YdiU.